Consider the following 85-residue polypeptide: Large ribosomal subunit protein bL27 (85 aa).

The disordered stretch occupies residues 1 to 21; that stretch reads MAHKKAGGSSRNGRDSEGRRL.

This sequence belongs to the bacterial ribosomal protein bL27 family.

The polypeptide is Large ribosomal subunit protein bL27 (Rhodospirillum rubrum (strain ATCC 11170 / ATH 1.1.1 / DSM 467 / LMG 4362 / NCIMB 8255 / S1)).